Here is a 381-residue protein sequence, read N- to C-terminus: 3-dehydroquinate synthase (381 aa).

Residues E81–K86, G115–D119, T139–S140, K152, and K161 each bind NAD(+). Zn(2+) is bound by residues E194, H256, and H274.

This sequence belongs to the sugar phosphate cyclases superfamily. Dehydroquinate synthase family. The cofactor is Co(2+). Zn(2+) is required as a cofactor. NAD(+) serves as cofactor.

It is found in the cytoplasm. The catalysed reaction is 7-phospho-2-dehydro-3-deoxy-D-arabino-heptonate = 3-dehydroquinate + phosphate. The protein operates within metabolic intermediate biosynthesis; chorismate biosynthesis; chorismate from D-erythrose 4-phosphate and phosphoenolpyruvate: step 2/7. Catalyzes the conversion of 3-deoxy-D-arabino-heptulosonate 7-phosphate (DAHP) to dehydroquinate (DHQ). This chain is 3-dehydroquinate synthase, found in Rhodopseudomonas palustris (strain TIE-1).